The following is a 353-amino-acid chain: Mitochondrial ubiquitin ligase activator of nfkb 1 (353 aa).

Over 1–8 (MENGGRPS) the chain is Cytoplasmic. A helical membrane pass occupies residues 9-29 (VGQVILLTTSSAITALFYSIY). Residues 30-239 (RHKYRSVQTL…LLEKQEVQMR (210 aa)) lie on the Mitochondrial intermembrane side of the membrane. Residues 240–260 (WWRILSIVFGVASCITLFFIL) traverse the membrane as a helical segment. At 261–353 (RRKYRHYKEK…IDRIVPLYNS (93 aa)) the chain is on the cytoplasmic side. An RING-type zinc finger spans residues 303–341 (CSICLSTEKSCVFLECGHVCSCISCYQALPSPKKCPICR).

As to quaternary structure, homooligomer.

The protein localises to the mitochondrion outer membrane. It catalyses the reaction S-ubiquitinyl-[E2 ubiquitin-conjugating enzyme]-L-cysteine + [acceptor protein]-L-lysine = [E2 ubiquitin-conjugating enzyme]-L-cysteine + N(6)-ubiquitinyl-[acceptor protein]-L-lysine.. Its pathway is protein modification; protein ubiquitination. E3 ubiquitin-protein ligase that plays a role in the control of mitochondrial morphology. Promotes mitochondrial fragmentation and influences mitochondrial localization. Inhibits cell growth. E3 ubiquitin ligases accept ubiquitin from an E2 ubiquitin-conjugating enzyme in the form of a thioester and then directly transfer the ubiquitin to targeted substrates. The polypeptide is Mitochondrial ubiquitin ligase activator of nfkb 1 (mul1) (Xenopus laevis (African clawed frog)).